The chain runs to 368 residues: snRNA-activating protein complex subunit 1 (368 aa).

An SNAPC3-binding region spans residues 1–168 (MGTPPGLQTD…EEFKDPSDRV (168 aa)). The SNAPC4-binding stretch occupies residues 164–268 (PSDRVMKLIT…AESLAKIKSK (105 aa)). 2 disordered regions span residues 224–257 (QQWHKDRKNPSLKSKTNDGEEKMEGNSQETERCE) and 275–368 (QASK…RRKH). Basic and acidic residues predominate over residues 238–257 (KTNDGEEKMEGNSQETERCE). Residues Ser-289 and Ser-290 each carry the phosphoserine modification.

Part of the SNAPc complex composed of 5 subunits: SNAPC1, SNAPC2, SNAPC3, SNAPC4 and SNAPC5. SNAPC1 interacts with SNAPC3, SNAPC4 and TBP.

Its subcellular location is the nucleus. Part of the SNAPc complex required for the transcription of both RNA polymerase II and III small-nuclear RNA genes. Binds to the proximal sequence element (PSE), a non-TATA-box basal promoter element common to these 2 types of genes. Recruits TBP and BRF2 to the U6 snRNA TATA box. This Homo sapiens (Human) protein is snRNA-activating protein complex subunit 1 (SNAPC1).